The chain runs to 149 residues: uncharacterized protein (149 aa).

This is an uncharacterized protein from Archaeoglobus fulgidus (strain ATCC 49558 / DSM 4304 / JCM 9628 / NBRC 100126 / VC-16).